Here is a 256-residue protein sequence, read N- to C-terminus: Hemin import ATP-binding protein HmuV (256 aa).

One can recognise an ABC transporter domain in the interval Ile2–Asp238. Gly34–Ser41 provides a ligand contact to ATP.

This sequence belongs to the ABC transporter superfamily. Heme (hemin) importer (TC 3.A.1.14.5) family. In terms of assembly, the complex is composed of two ATP-binding proteins (HmuV), two transmembrane proteins (HmuU) and a solute-binding protein (HmuT).

The protein localises to the cell inner membrane. Functionally, part of the ABC transporter complex HmuTUV involved in hemin import. Responsible for energy coupling to the transport system. In Escherichia coli O157:H7, this protein is Hemin import ATP-binding protein HmuV.